We begin with the raw amino-acid sequence, 363 residues long: Cyanuric acid amidohydrolase (363 aa).

The RU A stretch occupies residues 1–103 (MKTRVTRLTV…LVFEVDDSAP (103 aa)). Substrate is bound by residues Arg51 and 82–83 (SG). Residues 111 to 247 (GLAAGVAFTR…NEVLVLGNAP (137 aa)) form an RU B region. Lys161 is a catalytic residue. Residues Arg193 and 230-231 (SA) contribute to the substrate site. The active-site Nucleophile is the Ser230. The segment at 253–363 (YRIGHAVMED…GGPLALIVRS (111 aa)) is RU C. Mg(2+) is bound at residue Glu297. Substrate-binding positions include Arg324 and 343 to 344 (SG). Residues Ala346, Gln349, Gly350, Pro351, and Gly354 each contribute to the Mg(2+) site.

This sequence belongs to the cyclic amide hydrolase (CyAH) family. In terms of assembly, homotetramer.

It carries out the reaction cyanurate + H2O = 1-carboxybiuret + H(+). Its pathway is xenobiotic degradation; atrazine degradation; biuret from cyanurate: step 1/1. With respect to regulation, inhibited by barbituric acid. Responsible for the hydrolysis of cyanuric acid, an intermediate formed during catabolism of s-triazine based compounds in herbicides such as atrazine and polymers such as melamine. Catalyzes the hydrolytic opening of the s-triazine ring of cyanuric acid (2,4,6-trihydroxy-s-triazine) to yield carbon dioxide and carboxybiuret, which spontaneously decarboxylates to biuret. The polypeptide is Cyanuric acid amidohydrolase (Ectopseudomonas oleovorans (strain CECT 5344) (Pseudomonas pseudoalcaligenes)).